The chain runs to 89 residues: Small ribosomal subunit protein uS15 (89 aa).

It belongs to the universal ribosomal protein uS15 family. Part of the 30S ribosomal subunit. Forms a bridge to the 50S subunit in the 70S ribosome, contacting the 23S rRNA.

In terms of biological role, one of the primary rRNA binding proteins, it binds directly to 16S rRNA where it helps nucleate assembly of the platform of the 30S subunit by binding and bridging several RNA helices of the 16S rRNA. Forms an intersubunit bridge (bridge B4) with the 23S rRNA of the 50S subunit in the ribosome. The sequence is that of Small ribosomal subunit protein uS15 from Ectopseudomonas mendocina (strain ymp) (Pseudomonas mendocina).